Reading from the N-terminus, the 1204-residue chain is Exportin-5 (1204 aa).

Ala2 carries the N-acetylalanine modification. Positions 2–108 (AMDQVNALCE…ANGTLNILEE (107 aa)) are necessary for interaction with Ran. Position 396 is an N6-acetyllysine (Lys396). The tract at residues 533–640 (ELLQMVLNFD…KQLLSNELLL (108 aa)) is necessary for interaction with ILF3. A pre-miRNA binding region spans residues 641-642 (TQ). Ser826 carries the phosphoserine modification.

This sequence belongs to the exportin family. Component of a nuclear export receptor complex composed of XPO5, RAN, dsRNA-binding proteins and dsRNA. Found in a nuclear export complex with XPO5, RAN, EEF1A1, and aminoacylated tRNA. Found in a nuclear export complex with XPO5, RAN, ILF3 and dsRNA. Found in a nuclear export complex with XPO5, RAN and pre-miRNA. Found in a nuclear export complex with XPO5, RAN, ILF3 and minihelix VA1 dsRNA. Found in a nuclear export complex with XPO5, RAN, ILF3, ZNF346 and dsRNA. Interacts with EEF1A1, ILF3, NUP153, NUP214 and ZNF346. Interacts with RAN and cargo proteins in a GTP-dependent manner. Interacts with isoform 5 of ADAR/ADAR1 (via DRBM domains). Interacts with SMAD4; mediates nuclear export of SMAD4. Interacts with RAN (GTP-bound form). In terms of tissue distribution, expressed in heart, brain, placenta, lung, skeletal muscle, kidney and pancreas.

The protein localises to the nucleus. Its subcellular location is the cytoplasm. In terms of biological role, mediates the nuclear export of proteins bearing a double-stranded RNA binding domain (dsRBD) and double-stranded RNAs (cargos). XPO5 in the nucleus binds cooperatively to the RNA and to the GTPase Ran in its active GTP-bound form. Proteins containing dsRBDs can associate with this trimeric complex through the RNA. Docking of this complex to the nuclear pore complex (NPC) is mediated through binding to nucleoporins. Upon transit of a nuclear export complex into the cytoplasm, hydrolysis of Ran-GTP to Ran-GDP (induced by RANBP1 and RANGAP1, respectively) cause disassembly of the complex and release of the cargo from the export receptor. XPO5 then returns to the nuclear compartment by diffusion through the nuclear pore complex, to mediate another round of transport. The directionality of nuclear export is thought to be conferred by an asymmetric distribution of the GTP- and GDP-bound forms of Ran between the cytoplasm and nucleus. Overexpression may in some circumstances enhance RNA-mediated gene silencing (RNAi). Mediates nuclear export of isoform 5 of ADAR/ADAR1 in a RanGTP-dependent manner. Functionally, mediates the nuclear export of micro-RNA precursors, which form short hairpins. Also mediates the nuclear export of synthetic short hairpin RNAs used for RNA interference. In some circumstances can also mediate the nuclear export of deacylated and aminoacylated tRNAs. Specifically recognizes dsRNAs that lack a 5'-overhang in a sequence-independent manner, have only a short 3'-overhang, and that have a double-stranded length of at least 15 base-pairs. Binding is dependent on Ran-GTP. (Microbial infection) Mediates the nuclear export of adenovirus VA1 dsRNA. The protein is Exportin-5 (XPO5) of Homo sapiens (Human).